Consider the following 2108-residue polypeptide: Mycocerosic acid synthase-like polyketide synthase (2108 aa).

The first 23 residues, 1–23 (MGKERTKTVDRTRVTPVAVIGMG), serve as a signal peptide directing secretion. Cys-24 carries the N-palmitoyl cysteine lipid modification. Cys-24 carries S-diacylglycerol cysteine lipidation. The region spanning 24-436 (CRLPGGIDSP…GTNVHAIVEQ (413 aa)) is the Ketosynthase family 3 (KS3) domain. Catalysis depends on Cys-185, which acts as the Acyl-thioester intermediate; for beta-ketoacyl synthase activity. Residues His-320 and His-356 each act as for beta-ketoacyl synthase activity in the active site. Positions 438–542 (PVPAPESGAP…PYPPAVGQDD (105 aa)) are linker domain (LD). Positions 543 to 842 (RGPVWVFSGQ…AAALAGMRRE (300 aa)) are acyltransferase (AT). Ser-634 functions as the Acyl-ester intermediate; for acyltransferase activity in the catalytic mechanism. The dehydratase (DH) stretch occupies residues 900–1184 (NTVAVHPLLG…LAVRGLQLGT (285 aa)). The segment at 905 to 1025 (HPLLGSHVRL…AVLHVVREAD (121 aa)) is N-terminal hotdog fold. A PKS/mFAS DH domain is found at 905–1191 (HPLLGSHVRL…LGTGASQASE (287 aa)). His-938 serves as the catalytic Proton acceptor; for dehydratase activity. The interval 1044 to 1191 (PHKVDGAEVR…LGTGASQASE (148 aa)) is C-terminal hotdog fold. Asp-1108 acts as the Proton donor; for dehydratase activity in catalysis. Residues 1220–1391 (AWLLISTCDA…SGEDETAWRN (172 aa)) form a pseudo beta-ketoacyl reductase (PsiKR) region. The interval 1419–1743 (AGMRLQIRTP…EHTGKLILDV (325 aa)) is enoylreductase (ER). Residues 1765–2004 (GSYIITGGLG…HSPFAEKFQS (240 aa)) are beta-ketoacyl reductase (KR). NADP(+)-binding positions include 1773 to 1776 (LGGL), 1796 to 1799 (SRSQ), 1824 to 1825 (DI), and 1897 to 1898 (FS). The region spanning 2025–2101 (EEWPDRLRRL…DLMCDKLAAD (77 aa)) is the Carrier domain. Ser-2060 is subject to O-(pantetheine 4'-phosphoryl)serine.

As to quaternary structure, homodimer.

The protein localises to the cell membrane. It participates in lipid metabolism; fatty acid biosynthesis. Its function is as follows. Polyketide synthase likely involved in the biosynthesis of a polymethyl-branched fatty acid (PMB-FA) that might only be produced during host infection. Is required for the full virulence of M.tuberculosis during host infection. The chain is Mycocerosic acid synthase-like polyketide synthase from Mycobacterium tuberculosis (strain ATCC 25618 / H37Rv).